The primary structure comprises 195 residues: Nicotinamide riboside kinase 2 (195 aa).

9-17 lines the ATP pocket; that stretch reads GVTNGGKTT. Positions 16 and 35 each coordinate Mg(2+). Asp-35 serves as the catalytic Proton acceptor. Substrate contacts are provided by residues 35-38 and 54-55; these read DDFF and WD. Arg-130 contributes to the ATP binding site. Substrate-binding positions include Arg-131 and 136–137; that span reads YM. ATP-binding positions include 134–136 and 174–176; these read RTY and KSP.

It belongs to the uridine kinase family. NRK subfamily. Monomer. Interacts with ITGB1 alone or when associated with alpha-7, but not with alpha-5. As to expression, expressed in skeletal muscle (at protein level).

It carries out the reaction beta-nicotinamide D-riboside + ATP = beta-nicotinamide D-ribonucleotide + ADP + H(+). The enzyme catalyses beta-D-ribosylnicotinate + ATP = nicotinate beta-D-ribonucleotide + ADP + H(+). The protein operates within cofactor biosynthesis; NAD(+) biosynthesis. Catalyzes the phosphorylation of nicotinamide riboside (NR) and nicotinic acid riboside (NaR) to form nicotinamide mononucleotide (NMN) and nicotinic acid mononucleotide (NaMN). Reduces laminin matrix deposition and cell adhesion to laminin, but not to fibronectin. Involved in the regulation of PXN at the protein level and of PXN tyrosine phosphorylation. May play a role in the regulation of terminal myogenesis. In Mus musculus (Mouse), this protein is Nicotinamide riboside kinase 2 (Nmrk2).